The primary structure comprises 286 residues: Nucleotide-binding protein HCH_05324 (286 aa).

8 to 15 serves as a coordination point for ATP; that stretch reads GRSGSGKS. A GTP-binding site is contributed by 60–63; the sequence is DARN.

The protein belongs to the RapZ-like family.

Functionally, displays ATPase and GTPase activities. This chain is Nucleotide-binding protein HCH_05324, found in Hahella chejuensis (strain KCTC 2396).